The primary structure comprises 356 residues: tRNA-specific 2-thiouridylase MnmA 1 (356 aa).

ATP is bound by residues 8 to 15 (GMSGGVDS) and Met-34. The active-site Nucleophile is the Cys-103. Cys-103 and Cys-199 form a disulfide bridge. An ATP-binding site is contributed by Gly-127. An interaction with tRNA region spans residues 149–151 (KDQ). The Cysteine persulfide intermediate role is filled by Cys-199. The segment at 305-306 (RY) is interaction with tRNA.

It belongs to the MnmA/TRMU family.

The protein localises to the cytoplasm. The enzyme catalyses S-sulfanyl-L-cysteinyl-[protein] + uridine(34) in tRNA + AH2 + ATP = 2-thiouridine(34) in tRNA + L-cysteinyl-[protein] + A + AMP + diphosphate + H(+). Functionally, catalyzes the 2-thiolation of uridine at the wobble position (U34) of tRNA, leading to the formation of s(2)U34. The chain is tRNA-specific 2-thiouridylase MnmA 1 from Clostridium botulinum (strain Loch Maree / Type A3).